Reading from the N-terminus, the 533-residue chain is Probable fucosyltransferase 5 (533 aa).

At 1-13 the chain is on the cytoplasmic side; the sequence is MYQKFQISGKIVK. The helical; Signal-anchor for type II membrane protein transmembrane segment at 14–34 threads the bilayer; the sequence is TLGLKMKVLIAVSFGSLLFIL. The Lumenal portion of the chain corresponds to 35 to 533; sequence SYSNNFNNKL…YGGLKLYDEF (499 aa). Asn202, Asn227, Asn374, Asn396, and Asn475 each carry an N-linked (GlcNAc...) asparagine glycan.

This sequence belongs to the glycosyltransferase 37 family. Expressed in roots, leaves, flowers and siliques.

The protein resides in the golgi apparatus. It localises to the golgi stack membrane. The protein operates within protein modification; protein glycosylation. Its function is as follows. May be involved in cell wall biosynthesis. May act as a fucosyltransferase. This is Probable fucosyltransferase 5 (FUT5) from Arabidopsis thaliana (Mouse-ear cress).